Here is a 520-residue protein sequence, read N- to C-terminus: Pentatricopeptide repeat-containing protein At1g28690, mitochondrial (520 aa).

Residues 1–19 constitute a mitochondrion transit peptide; that stretch reads MRIFRFTSISPRILPSNHY. 11 PPR repeats span residues 68–98, 99–133, 134–168, 174–208, 209–235, 236–271, 272–306, 307–337, 338–372, 373–403, and 409–439; these read DLNI…LPKP, TLSA…GEKA, DGYT…RIIK, DDVL…NVVC, CTSM…TKVK, DIVV…GFHP, NIST…GVYT, HIKM…MQEK, NVFS…RIEP, NYVT…MQRD, and KMEH…MPER. Residues 444–520 are type E motif; the sequence is IWAALLSSCN…TIGRSWTSED (77 aa).

Belongs to the PPR family. PCMP-E subfamily.

Its subcellular location is the mitochondrion. The protein is Pentatricopeptide repeat-containing protein At1g28690, mitochondrial (PCMP-E34) of Arabidopsis thaliana (Mouse-ear cress).